A 264-amino-acid polypeptide reads, in one-letter code: Type 1 encapsulin shell protein (264 aa).

The protein belongs to the encapsulin family. Family 1 subfamily. In terms of assembly, forms hollow shells composed of 60 subunits. Monomers probably form pentamers which assemble into the shell. There are 12 pores where the pentamers meet as well as 3-fold axis channels and dimer channels; none are larger than 3-4 Angstroms in diameter. The N-terminus of the protein is inside the shell, the C-terminus is outside.

It is found in the encapsulin nanocompartment. In terms of biological role, shell component of a type 1 encapsulin nanocompartment. Assembles into proteinaceous shells 21-24 nm in diameter. Empty organelles can be expressed in E.coli. Cargo proteins (DypB) are targeted to the interior via their C-terminal extensions. This chain is Type 1 encapsulin shell protein, found in Rhodococcus erythropolis (strain PR4 / NBRC 100887).